The following is a 320-amino-acid chain: Citrate synthase (320 aa).

Residues H249 and D307 contribute to the active site.

Belongs to the citrate synthase family.

It carries out the reaction oxaloacetate + acetyl-CoA + H2O = citrate + CoA + H(+). Its pathway is carbohydrate metabolism; tricarboxylic acid cycle; isocitrate from oxaloacetate: step 1/2. This is Citrate synthase (gltA) from Bartonella doshiae.